The chain runs to 126 residues: Aspartate 1-decarboxylase (126 aa).

S25 serves as the catalytic Schiff-base intermediate with substrate; via pyruvic acid. Residue S25 is modified to Pyruvic acid (Ser). T57 provides a ligand contact to substrate. Y58 serves as the catalytic Proton donor. G73–A75 provides a ligand contact to substrate.

It belongs to the PanD family. As to quaternary structure, heterooctamer of four alpha and four beta subunits. It depends on pyruvate as a cofactor. Is synthesized initially as an inactive proenzyme, which is activated by self-cleavage at a specific serine bond to produce a beta-subunit with a hydroxyl group at its C-terminus and an alpha-subunit with a pyruvoyl group at its N-terminus.

The protein resides in the cytoplasm. The enzyme catalyses L-aspartate + H(+) = beta-alanine + CO2. The protein operates within cofactor biosynthesis; (R)-pantothenate biosynthesis; beta-alanine from L-aspartate: step 1/1. Its function is as follows. Catalyzes the pyruvoyl-dependent decarboxylation of aspartate to produce beta-alanine. In Saccharophagus degradans (strain 2-40 / ATCC 43961 / DSM 17024), this protein is Aspartate 1-decarboxylase.